Consider the following 347-residue polypeptide: Inositol 2-dehydrogenase (347 aa).

It belongs to the Gfo/Idh/MocA family. Homotetramer.

The catalysed reaction is myo-inositol + NAD(+) = scyllo-inosose + NADH + H(+). In terms of biological role, involved in the oxidation of myo-inositol (MI) to 2-keto-myo-inositol (2KMI or 2-inosose). The polypeptide is Inositol 2-dehydrogenase (Rubrobacter xylanophilus (strain DSM 9941 / JCM 11954 / NBRC 16129 / PRD-1)).